The primary structure comprises 191 residues: Flavin prenyltransferase UbiX (191 aa).

Residues 13 to 15 (GAS), T39, 90 to 93 (TMKT), and R125 each bind FMN. Dimethylallyl phosphate-binding residues include Y155 and K171.

The protein belongs to the UbiX/PAD1 family.

The catalysed reaction is dimethylallyl phosphate + FMNH2 = prenylated FMNH2 + phosphate. In terms of biological role, flavin prenyltransferase that catalyzes the synthesis of the prenylated FMN cofactor (prenyl-FMN) for 4-hydroxy-3-polyprenylbenzoic acid decarboxylase UbiD. The prenyltransferase is metal-independent and links a dimethylallyl moiety from dimethylallyl monophosphate (DMAP) to the flavin N5 and C6 atoms of FMN. This is Flavin prenyltransferase UbiX from Methanothermobacter thermautotrophicus (strain ATCC 29096 / DSM 1053 / JCM 10044 / NBRC 100330 / Delta H) (Methanobacterium thermoautotrophicum).